The following is a 145-amino-acid chain: Histone H2B (145 aa).

Residues 1 to 52 (MAPKAAAGKKPAEKKPVEEKKAEEVPAEKKPKAGKKLPKDAGRPDKKKKRAK) form a disordered region. K9, K35, and K36 each carry N6-acetyllysine. The span at 10 to 44 (KPAEKKPVEEKKAEEVPAEKKPKAGKKLPKDAGRP) shows a compositional bias: basic and acidic residues. K141 is covalently cross-linked (Glycyl lysine isopeptide (Lys-Gly) (interchain with G-Cter in ubiquitin)).

The protein belongs to the histone H2B family. The nucleosome is a histone octamer containing two molecules each of H2A, H2B, H3 and H4 assembled in one H3-H4 heterotetramer and two H2A-H2B heterodimers. The octamer wraps approximately 147 bp of DNA. Post-translationally, can be acetylated to form H2BK6ac, H2BK33ac and H2BK34ac. In terms of processing, monoubiquitinated to form H2BK143ub1; may give a specific tag for epigenetic transcriptional activation. In anthers, floral buds, pollen, petals and fruits.

The protein resides in the nucleus. It localises to the chromosome. Core component of nucleosome. Nucleosomes wrap and compact DNA into chromatin, limiting DNA accessibility to the cellular machineries which require DNA as a template. Histones thereby play a central role in transcription regulation, DNA repair, DNA replication and chromosomal stability. DNA accessibility is regulated via a complex set of post-translational modifications of histones, also called histone code, and nucleosome remodeling. In Capsicum annuum (Capsicum pepper), this protein is Histone H2B (HIS2B).